Here is a 334-residue protein sequence, read N- to C-terminus: Ribosomal RNA small subunit methyltransferase H (334 aa).

Residues 1 to 21 (MNALPIRTAAPSGHSGGHSST) form a disordered region. Residues 52–54 (GGY), Asp-71, Phe-98, Asp-119, and Gln-126 contribute to the S-adenosyl-L-methionine site.

This sequence belongs to the methyltransferase superfamily. RsmH family.

It localises to the cytoplasm. It catalyses the reaction cytidine(1402) in 16S rRNA + S-adenosyl-L-methionine = N(4)-methylcytidine(1402) in 16S rRNA + S-adenosyl-L-homocysteine + H(+). In terms of biological role, specifically methylates the N4 position of cytidine in position 1402 (C1402) of 16S rRNA. This is Ribosomal RNA small subunit methyltransferase H from Granulibacter bethesdensis (strain ATCC BAA-1260 / CGDNIH1).